A 279-amino-acid chain; its full sequence is UTP--glucose-1-phosphate uridylyltransferase (279 aa).

It belongs to the UDPGP type 2 family.

The catalysed reaction is alpha-D-glucose 1-phosphate + UTP + H(+) = UDP-alpha-D-glucose + diphosphate. Functionally, may play a role in stationary phase survival. The chain is UTP--glucose-1-phosphate uridylyltransferase (galU) from Pseudomonas aeruginosa.